A 199-amino-acid chain; its full sequence is Recombination protein RecR (199 aa).

The segment at 57-72 adopts a C4-type zinc-finger fold; the sequence is CRQCRVLTEEPVCGLC. The Toprim domain maps to 80–175; it reads SLLCVVEGPA…RTTRIAHGVP (96 aa).

This sequence belongs to the RecR family.

Functionally, may play a role in DNA repair. It seems to be involved in an RecBC-independent recombinational process of DNA repair. It may act with RecF and RecO. The polypeptide is Recombination protein RecR (Alkalilimnicola ehrlichii (strain ATCC BAA-1101 / DSM 17681 / MLHE-1)).